Reading from the N-terminus, the 612-residue chain is 1-deoxy-D-xylulose-5-phosphate synthase (612 aa).

Residues His-77 and 118-120 contribute to the thiamine diphosphate site; that span reads GHS. Asp-147 serves as a coordination point for Mg(2+). Thiamine diphosphate-binding positions include 148-149, Asn-176, Tyr-288, and Glu-365; that span reads AA. Asn-176 lines the Mg(2+) pocket.

This sequence belongs to the transketolase family. DXPS subfamily. As to quaternary structure, homodimer. It depends on Mg(2+) as a cofactor. Requires thiamine diphosphate as cofactor.

The enzyme catalyses D-glyceraldehyde 3-phosphate + pyruvate + H(+) = 1-deoxy-D-xylulose 5-phosphate + CO2. Its pathway is metabolic intermediate biosynthesis; 1-deoxy-D-xylulose 5-phosphate biosynthesis; 1-deoxy-D-xylulose 5-phosphate from D-glyceraldehyde 3-phosphate and pyruvate: step 1/1. Its function is as follows. Catalyzes the acyloin condensation reaction between C atoms 2 and 3 of pyruvate and glyceraldehyde 3-phosphate to yield 1-deoxy-D-xylulose-5-phosphate (DXP). The protein is 1-deoxy-D-xylulose-5-phosphate synthase of Malacoplasma penetrans (strain HF-2) (Mycoplasma penetrans).